We begin with the raw amino-acid sequence, 128 residues long: KHDC1-like protein (128 aa).

This sequence belongs to the KHDC1 family.

In Homo sapiens (Human), this protein is KHDC1-like protein (KHDC1L).